Consider the following 505-residue polypeptide: uncharacterized protein (505 aa).

An N-terminal signal peptide occupies residues 1 to 22 (MAILKSALVGFICFLHFFIVNA). N-linked (GlcNAc...) asparagine glycans are attached at residues asparagine 25 and asparagine 114. The next 5 helical transmembrane spans lie at 181–201 (LFLN…WSFI), 216–236 (ISGV…YFYF), 266–286 (FLLL…GSLL), 291–311 (ILAG…FISP), and 318–338 (VILF…LWIV). A glycan (N-linked (GlcNAc...) asparagine) is linked at asparagine 342. 2 helical membrane passes run 365 to 385 (IVIC…AILI) and 400 to 420 (LLWF…MLTI). Asparagine 454 carries an N-linked (GlcNAc...) asparagine glycan.

This sequence belongs to the LU7TM family.

The protein resides in the membrane. This is an uncharacterized protein from Schizosaccharomyces pombe (strain 972 / ATCC 24843) (Fission yeast).